The following is a 528-amino-acid chain: Major facilitator-type transporter psiT2 (528 aa).

The disordered stretch occupies residues 1–20 (MSPERSASLEPDEHSSLLSD). The next 5 helical transmembrane spans lie at 87–107 (FYSG…IFML), 125–145 (LGVA…MMLV), 148–168 (VCAG…SELT), 174–194 (ALVV…GPLI), and 220–240 (FLPS…GYFF). A compositionally biased stretch (low complexity) spans 260-270 (STSSISSRTST). The interval 260–299 (STSSISSRTSTLYGATDDHNRDASESTALSPEEAEDEIDS) is disordered. A run of 6 helical transmembrane segments spans residues 322–342 (FLMF…FTAV), 357–377 (AFSV…PWVL), 388–408 (FCMF…PLAQ), 424–444 (GLLY…VMAF), 460–479 (LATA…ALCP), and 493–513 (NILG…AGVW).

This sequence belongs to the major facilitator superfamily. TCR/Tet family.

Its subcellular location is the membrane. In terms of biological role, major facilitator-type transporter; part of the gene cluster that mediates the biosynthesis of psilocybin, a psychotropic tryptamine-derived natural product. The chain is Major facilitator-type transporter psiT2 from Psilocybe cyanescens.